A 440-amino-acid chain; its full sequence is Chromosomal replication initiator protein DnaA (440 aa).

The interval 1–69 (MKERILQEIK…VKVVLGNDAT (69 aa)) is domain I, interacts with DnaA modulators. The segment at 69-96 (TFEITYEAFEPHSSYSEPLVKKRAVLLT) is domain II. Residues 97–313 (PLNPDYTFEN…GAIIKLLVYK (217 aa)) form a domain III, AAA+ region region. ATP is bound by residues G140, G142, K143, and T144. The tract at residues 314-440 (ETTGKEVDLK…GEISRRALSG (127 aa)) is domain IV, binds dsDNA.

This sequence belongs to the DnaA family. Oligomerizes as a right-handed, spiral filament on DNA at oriC.

It localises to the cytoplasm. Plays an essential role in the initiation and regulation of chromosomal replication. ATP-DnaA binds to the origin of replication (oriC) to initiate formation of the DNA replication initiation complex once per cell cycle. Binds the DnaA box (a 9 base pair repeat at the origin) and separates the double-stranded (ds)DNA. Forms a right-handed helical filament on oriC DNA; dsDNA binds to the exterior of the filament while single-stranded (ss)DNA is stabiized in the filament's interior. The ATP-DnaA-oriC complex binds and stabilizes one strand of the AT-rich DNA unwinding element (DUE), permitting loading of DNA polymerase. After initiation quickly degrades to an ADP-DnaA complex that is not apt for DNA replication. Binds acidic phospholipids. This is Chromosomal replication initiator protein DnaA from Thermotoga sp. (strain RQ2).